The chain runs to 411 residues: Argininosuccinate synthase (411 aa).

ATP-binding positions include A10–S18 and A37. L-citrulline contacts are provided by Y89 and S94. G119 contacts ATP. Residues T121, N125, and D126 each coordinate L-aspartate. N125 contacts L-citrulline. 5 residues coordinate L-citrulline: R129, S178, S187, E263, and Y275.

It belongs to the argininosuccinate synthase family. Type 1 subfamily. In terms of assembly, homotetramer.

The protein resides in the cytoplasm. The enzyme catalyses L-citrulline + L-aspartate + ATP = 2-(N(omega)-L-arginino)succinate + AMP + diphosphate + H(+). Its pathway is amino-acid biosynthesis; L-arginine biosynthesis; L-arginine from L-ornithine and carbamoyl phosphate: step 2/3. This Aeromonas hydrophila subsp. hydrophila (strain ATCC 7966 / DSM 30187 / BCRC 13018 / CCUG 14551 / JCM 1027 / KCTC 2358 / NCIMB 9240 / NCTC 8049) protein is Argininosuccinate synthase.